The sequence spans 282 residues: tRNA N(3)-cytidine methyltransferase METTL6 (282 aa).

Residues W45, Y49, G87, D110, D136, L137, and I157 each coordinate S-adenosyl-L-methionine.

Belongs to the methyltransferase superfamily. METL family. In terms of assembly, monomer. Interacts with SARS1/SerRS; interaction is mediated via tRNA(Ser) and is required for N(3)-methylcytidine methylation.

It is found in the cytoplasm. The protein localises to the nucleus. The enzyme catalyses cytidine(32) in tRNA(Ser) + S-adenosyl-L-methionine = N(3)-methylcytidine(32) in tRNA(Ser) + S-adenosyl-L-homocysteine + H(+). In terms of biological role, S-adenosyl-L-methionine-dependent methyltransferase that mediates N(3)-methylcytidine modification of residue 32 of the tRNA anticodon loop of tRNA(Ser), including tRNA(Ser)(UGA) and tRNA(Ser)(GCU). Interaction with SARS1/SerRS is required for N(3)-methylcytidine methylation. The polypeptide is tRNA N(3)-cytidine methyltransferase METTL6 (Mus musculus (Mouse)).